A 567-amino-acid polypeptide reads, in one-letter code: uncharacterized protein (567 aa).

A run of 6 helical transmembrane segments spans residues 20–40, 69–89, 95–115, 126–146, 168–188, and 528–548; these read FTIL…SGVL, SLET…SVFI, AYLT…VALI, ILLN…FMCL, IPLV…YLLF, and IFGS…LLAI.

It localises to the cell membrane. This is an uncharacterized protein from Escherichia coli (strain K12).